We begin with the raw amino-acid sequence, 340 residues long: Glutamine synthetase (340 aa).

In terms of domain architecture, GS beta-grasp spans I3–T82. Residues T88 to I340 enclose the GS catalytic domain. The Mg(2+) site is built by E109, E111, E171, and E178. E276 contributes to the L-glutamate binding site.

It belongs to the glutamine synthetase family. As to quaternary structure, homooctamer and homotetramer. It depends on Mg(2+) as a cofactor.

The protein localises to the cytoplasm. The catalysed reaction is L-glutamate + NH4(+) + ATP = L-glutamine + ADP + phosphate + H(+). Its function is as follows. Catalyzes the ATP-dependent biosynthesis of glutamine from glutamate and ammonia. This is Glutamine synthetase from Streptomyces hygroscopicus.